Here is a 177-residue protein sequence, read N- to C-terminus: RNA silencing suppressor (177 aa).

As to quaternary structure, homooctamer. The eight monomers assemble into a closed ring that binds RNA.

It localises to the host cytoplasm. Functionally, acts as a suppressor of RNA-mediated gene silencing, also known as post-transcriptional gene silencing (PTGS), a mechanism of plant viral defense that limits the accumulation of viral RNAs. Binds to ssRNAs and dsRNAs in vitro. Also functions as a replication enhancer. The chain is RNA silencing suppressor from Beta vulgaris (Sugar beet).